Reading from the N-terminus, the 458-residue chain is Probable alpha-L-glutamate ligase (458 aa).

The unknown stretch occupies residues 1-162; it reads MSDNKFIIGS…YGVKSAKKSG (162 aa). The interval 163-458 is alpha-L-glutamate ligase; it reads LKIGLLASNP…IEKKLGWKAE (296 aa). The 184-residue stretch at 267-450 folds into the ATP-grasp domain; that stretch reads LQLLQKNNLD…IAGAMIDSIE (184 aa). ATP-binding positions include lysine 304, 341–342, aspartate 350, and 374–376; these read EF and RAN. Mg(2+) is bound by residues aspartate 411, glutamate 423, and asparagine 425. Positions 411, 423, and 425 each coordinate Mn(2+).

In the C-terminal section; belongs to the RimK family. Mg(2+) is required as a cofactor. The cofactor is Mn(2+).

This chain is Probable alpha-L-glutamate ligase, found in Shewanella halifaxensis (strain HAW-EB4).